The primary structure comprises 166 residues: Ribosome maturation factor RimM (166 aa).

The region spanning 90 to 163 (EGEFLVSQII…TVTIELLEGL (74 aa)) is the PRC barrel domain.

This sequence belongs to the RimM family. Binds ribosomal protein uS19.

The protein resides in the cytoplasm. In terms of biological role, an accessory protein needed during the final step in the assembly of 30S ribosomal subunit, possibly for assembly of the head region. Essential for efficient processing of 16S rRNA. May be needed both before and after RbfA during the maturation of 16S rRNA. It has affinity for free ribosomal 30S subunits but not for 70S ribosomes. The chain is Ribosome maturation factor RimM from Oenococcus oeni (strain ATCC BAA-331 / PSU-1).